The sequence spans 178 residues: ATP synthase subunit delta (178 aa).

The protein belongs to the ATPase delta chain family. F-type ATPases have 2 components, F(1) - the catalytic core - and F(0) - the membrane proton channel. F(1) has five subunits: alpha(3), beta(3), gamma(1), delta(1), epsilon(1). F(0) has three main subunits: a(1), b(2) and c(10-14). The alpha and beta chains form an alternating ring which encloses part of the gamma chain. F(1) is attached to F(0) by a central stalk formed by the gamma and epsilon chains, while a peripheral stalk is formed by the delta and b chains.

The protein localises to the cell inner membrane. Its function is as follows. F(1)F(0) ATP synthase produces ATP from ADP in the presence of a proton or sodium gradient. F-type ATPases consist of two structural domains, F(1) containing the extramembraneous catalytic core and F(0) containing the membrane proton channel, linked together by a central stalk and a peripheral stalk. During catalysis, ATP synthesis in the catalytic domain of F(1) is coupled via a rotary mechanism of the central stalk subunits to proton translocation. This protein is part of the stalk that links CF(0) to CF(1). It either transmits conformational changes from CF(0) to CF(1) or is implicated in proton conduction. In Methylococcus capsulatus (strain ATCC 33009 / NCIMB 11132 / Bath), this protein is ATP synthase subunit delta.